Here is a 261-residue protein sequence, read N- to C-terminus: 3-methyl-2-oxobutanoate hydroxymethyltransferase (261 aa).

2 residues coordinate Mg(2+): Asp-42 and Asp-81. 3-methyl-2-oxobutanoate-binding positions include 42 to 43 (DS), Asp-81, and Lys-110. Residue Glu-112 participates in Mg(2+) binding. Glu-179 acts as the Proton acceptor in catalysis.

This sequence belongs to the PanB family. In terms of assembly, homodecamer; pentamer of dimers. Mg(2+) serves as cofactor.

The protein resides in the cytoplasm. It carries out the reaction 3-methyl-2-oxobutanoate + (6R)-5,10-methylene-5,6,7,8-tetrahydrofolate + H2O = 2-dehydropantoate + (6S)-5,6,7,8-tetrahydrofolate. It participates in cofactor biosynthesis; coenzyme A biosynthesis. Its function is as follows. Catalyzes the reversible reaction in which hydroxymethyl group from 5,10-methylenetetrahydrofolate is transferred onto alpha-ketoisovalerate to form ketopantoate. This Pyrobaculum neutrophilum (strain DSM 2338 / JCM 9278 / NBRC 100436 / V24Sta) (Thermoproteus neutrophilus) protein is 3-methyl-2-oxobutanoate hydroxymethyltransferase.